Consider the following 275-residue polypeptide: N-(5'-phosphoribosyl)anthranilate isomerase 2, chloroplastic (275 aa).

The N-terminal 32 residues, 1–32, are a transit peptide targeting the chloroplast; the sequence is MSTGISTDLHVHFGALNFSKTYKSGLSNRTVS.

It belongs to the TrpF family. Expressed in roots and shoots.

It localises to the plastid. It is found in the chloroplast. It carries out the reaction N-(5-phospho-beta-D-ribosyl)anthranilate = 1-(2-carboxyphenylamino)-1-deoxy-D-ribulose 5-phosphate. The protein operates within amino-acid biosynthesis; L-tryptophan biosynthesis; L-tryptophan from chorismate: step 3/5. This chain is N-(5'-phosphoribosyl)anthranilate isomerase 2, chloroplastic (PAI2), found in Arabidopsis thaliana (Mouse-ear cress).